A 264-amino-acid chain; its full sequence is Thiazole synthase (264 aa).

K98 serves as the catalytic Schiff-base intermediate with DXP. Residues G159, 185-186, and 207-208 each bind 1-deoxy-D-xylulose 5-phosphate; these read AG and AT.

It belongs to the ThiG family. In terms of assembly, homotetramer. Forms heterodimers with either ThiH or ThiS.

It localises to the cytoplasm. The enzyme catalyses [ThiS sulfur-carrier protein]-C-terminal-Gly-aminoethanethioate + 2-iminoacetate + 1-deoxy-D-xylulose 5-phosphate = [ThiS sulfur-carrier protein]-C-terminal Gly-Gly + 2-[(2R,5Z)-2-carboxy-4-methylthiazol-5(2H)-ylidene]ethyl phosphate + 2 H2O + H(+). It functions in the pathway cofactor biosynthesis; thiamine diphosphate biosynthesis. Its function is as follows. Catalyzes the rearrangement of 1-deoxy-D-xylulose 5-phosphate (DXP) to produce the thiazole phosphate moiety of thiamine. Sulfur is provided by the thiocarboxylate moiety of the carrier protein ThiS. In vitro, sulfur can be provided by H(2)S. This is Thiazole synthase from Mycobacterium marinum (strain ATCC BAA-535 / M).